The chain runs to 104 residues: MKIHKGDTVIVISGPDKGAKGKVIEAYPKRDKVLVEGVNRIKKHVANSAPERGAESGGIVTQEAPIHVSNVMIIDADGNPTRVGYRFDENGKKVRISRRTGKDI.

The protein belongs to the universal ribosomal protein uL24 family. In terms of assembly, part of the 50S ribosomal subunit.

Its function is as follows. One of two assembly initiator proteins, it binds directly to the 5'-end of the 23S rRNA, where it nucleates assembly of the 50S subunit. Functionally, one of the proteins that surrounds the polypeptide exit tunnel on the outside of the subunit. This Corynebacterium kroppenstedtii (strain DSM 44385 / JCM 11950 / CIP 105744 / CCUG 35717) protein is Large ribosomal subunit protein uL24.